The following is a 1088-amino-acid chain: DNA polymerase delta catalytic subunit (1088 aa).

This sequence belongs to the DNA polymerase type-B family. In terms of assembly, heterodimer with subunits of 125 kDa and 50 kDa. The 125 kDa subunit contains the polymerase active site and most likely the active site for the 3'-5' exonuclease activity.

Its subcellular location is the nucleus. It carries out the reaction DNA(n) + a 2'-deoxyribonucleoside 5'-triphosphate = DNA(n+1) + diphosphate. Functionally, this polymerase possesses two enzymatic activities: DNA synthesis (polymerase) and an exonucleolytic activity that degrades single-stranded DNA in the 3'- to 5'-direction. The polypeptide is DNA polymerase delta catalytic subunit (POLD1) (Glycine max (Soybean)).